A 218-amino-acid chain; its full sequence is Cytochrome b6 (218 aa).

A helical membrane pass occupies residues 35 to 55 (IFYCLGGITLVCFLIQFATGF). Cysteine 38 contributes to the heme c binding site. Histidine 89 and histidine 103 together coordinate heme b. 3 helical membrane passes run 93–113 (ASMM…TGGF), 119–139 (LTWI…VTGY), and 189–209 (LHTF…FLMI). Residues histidine 190 and histidine 205 each coordinate heme b.

It belongs to the cytochrome b family. PetB subfamily. In terms of assembly, the 4 large subunits of the cytochrome b6-f complex are cytochrome b6, subunit IV (17 kDa polypeptide, PetD), cytochrome f and the Rieske protein, while the 4 small subunits are PetG, PetL, PetM and PetN. The complex functions as a dimer. Heme b is required as a cofactor. The cofactor is heme c.

Its subcellular location is the cellular thylakoid membrane. Functionally, component of the cytochrome b6-f complex, which mediates electron transfer between photosystem II (PSII) and photosystem I (PSI), cyclic electron flow around PSI, and state transitions. In Prochlorococcus marinus (strain NATL1A), this protein is Cytochrome b6.